Reading from the N-terminus, the 254-residue chain is Ribosomal RNA small subunit methyltransferase G (254 aa).

The tract at residues 84–109 (NTESKTSLNNAETKNTNEALLTSEPF) is insert. S-adenosyl-L-methionine-binding positions include glycine 115, phenylalanine 120, 171–172 (AE), and arginine 185.

It belongs to the methyltransferase superfamily. RNA methyltransferase RsmG family.

Its subcellular location is the cytoplasm. In terms of biological role, specifically methylates the N7 position of a guanine in 16S rRNA. This is Ribosomal RNA small subunit methyltransferase G from Treponema denticola (strain ATCC 35405 / DSM 14222 / CIP 103919 / JCM 8153 / KCTC 15104).